The following is a 497-amino-acid chain: Signal recognition particle receptor FtsY (497 aa).

Disordered regions lie at residues 1-63 and 79-130; these read MAKE…TEAE and AESE…EWQA. Residues 87-96 are compositionally biased toward low complexity; that stretch reads EAEVVAQPEP. GTP is bound by residues 300-307, 382-386, and 446-449; these read GVNGVGKT, DTAGR, and TKLD.

The protein belongs to the GTP-binding SRP family. FtsY subfamily. In terms of assembly, part of the signal recognition particle protein translocation system, which is composed of SRP and FtsY. SRP is a ribonucleoprotein composed of Ffh and a 4.5S RNA molecule. Binds to SecY. Proteolytically cleaved. The cleavage may regulate function and subcellular location of FtsY. Full-length FtsY is found primarily associated with the membrane, while cleaved protein is predominantly present in the cytoplasm.

It is found in the cell inner membrane. Its subcellular location is the cytoplasm. It carries out the reaction GTP + H2O = GDP + phosphate + H(+). Conformation of the Ffh-FtsY complex and regulation of its GTPase activity are modulated by the 4.5S RNA. Formation of the FfH-FtsY complex leads to a mutual stimulation of both GTPases. Involved in targeting and insertion of nascent membrane proteins into the cytoplasmic membrane. Acts as a receptor for the complex formed by the signal recognition particle (SRP) and the ribosome-nascent chain (RNC). Interaction with SRP-RNC leads to the transfer of the RNC complex to the Sec translocase for insertion into the membrane, the hydrolysis of GTP by both Ffh and FtsY, and the dissociation of the SRP-FtsY complex into the individual components. This Escherichia coli (strain K12) protein is Signal recognition particle receptor FtsY.